The primary structure comprises 711 residues: Hepatocyte growth factor-like protein (711 aa).

Positions 1–18 are cleaved as a signal peptide; sequence MGWLPLLLLLTQCLGVPG. In terms of domain architecture, PAN spans 21-105; sequence SPLNDFQVLR…GRCDLFQKKD (85 aa). 20 disulfides stabilise this stretch: Cys56-Cys78, Cys60-Cys66, Cys110-Cys186, Cys131-Cys169, Cys157-Cys181, Cys191-Cys268, Cys194-Cys324, Cys212-Cys251, Cys240-Cys263, Cys283-Cys361, Cys304-Cys343, Cys332-Cys355, Cys370-Cys448, Cys391-Cys431, Cys419-Cys443, Cys468-Cys588, Cys507-Cys523, Cys602-Cys667, Cys632-Cys646, and Cys657-Cys685. N-linked (GlcNAc...) asparagine glycosylation occurs at Asn72. Kringle domains lie at 110–186, 191–268, 283–361, and 370–448; these read CIMN…IKSC, CVWC…LPRC, CFRG…IRRC, and CYHG…LRRC. N-linked (GlcNAc...) asparagine glycosylation occurs at Asn296. The region spanning 484 to 709 is the Peptidase S1 domain; it reads VVGGHPGNSP…FVDWIHKVMR (226 aa). N-linked (GlcNAc...) asparagine glycosylation is present at Asn615.

Belongs to the peptidase S1 family. Plasminogen subfamily. Dimer of an alpha chain and a beta chain linked by a disulfide bond. Interacts (via beta chain) with MST1R (via SEMA domain). In terms of processing, cleaved after Arg-483, probably by HPN/Hepsin, to yield the active form consisting of two disulfide-linked chains.

It localises to the secreted. The chain is Hepatocyte growth factor-like protein (MST1) from Homo sapiens (Human).